Reading from the N-terminus, the 107-residue chain is Iron-sulfur cluster assembly protein CyaY (107 aa).

Belongs to the frataxin family.

In terms of biological role, involved in iron-sulfur (Fe-S) cluster assembly. May act as a regulator of Fe-S biogenesis. This is Iron-sulfur cluster assembly protein CyaY from Neisseria gonorrhoeae (strain ATCC 700825 / FA 1090).